The following is a 305-amino-acid chain: Acetyl-coenzyme A carboxylase carboxyl transferase subunit alpha (305 aa).

In terms of domain architecture, CoA carboxyltransferase C-terminal spans 33-280; it reads AKLESSTALS…KEQILKDLAD (248 aa).

The protein belongs to the AccA family. As to quaternary structure, acetyl-CoA carboxylase is a heterohexamer composed of biotin carboxyl carrier protein (AccB), biotin carboxylase (AccC) and two subunits each of ACCase subunit alpha (AccA) and ACCase subunit beta (AccD).

It localises to the cytoplasm. The enzyme catalyses N(6)-carboxybiotinyl-L-lysyl-[protein] + acetyl-CoA = N(6)-biotinyl-L-lysyl-[protein] + malonyl-CoA. The protein operates within lipid metabolism; malonyl-CoA biosynthesis; malonyl-CoA from acetyl-CoA: step 1/1. In terms of biological role, component of the acetyl coenzyme A carboxylase (ACC) complex. First, biotin carboxylase catalyzes the carboxylation of biotin on its carrier protein (BCCP) and then the CO(2) group is transferred by the carboxyltransferase to acetyl-CoA to form malonyl-CoA. The sequence is that of Acetyl-coenzyme A carboxylase carboxyl transferase subunit alpha from Treponema denticola (strain ATCC 35405 / DSM 14222 / CIP 103919 / JCM 8153 / KCTC 15104).